The sequence spans 539 residues: Prolyl 4-hydroxylase subunit alpha-2 (539 aa).

A signal peptide spans 1–16 (MRAVLLVCLLAGLAHA). Asn110 is a glycosylation site (N-linked (GlcNAc...) asparagine). Residues 401-509 (TSEELQVANY…KWVSNKWIHE (109 aa)) enclose the Fe2OG dioxygenase domain. Residues His419, Asp421, and His490 each contribute to the Fe cation site. Lys500 contacts 2-oxoglutarate.

This sequence belongs to the P4HA family. In terms of assembly, heterotetramer of two alpha chains and two beta chains. Exist either as a phy-2(2)/pdi-2(2) tetramer or as a phy-1/phy-2/pdi-2(2) tetramer. It depends on Fe(2+) as a cofactor. L-ascorbate serves as cofactor.

Its subcellular location is the endoplasmic reticulum lumen. It carries out the reaction L-prolyl-[collagen] + 2-oxoglutarate + O2 = trans-4-hydroxy-L-prolyl-[collagen] + succinate + CO2. In terms of biological role, catalyzes the post-translational formation of 4-hydroxyproline in -Xaa-Pro-Gly- sequences in collagens and other proteins. This is Prolyl 4-hydroxylase subunit alpha-2 (phy-2) from Caenorhabditis elegans.